Here is a 365-residue protein sequence, read N- to C-terminus: sn-glycerol-3-phosphate import ATP-binding protein UgpC (365 aa).

The ABC transporter domain maps to 4–234 (LSLRNVQKHY…PASTFVAGFI (231 aa)). 36 to 43 (GPSGCGKS) is an ATP binding site.

The protein belongs to the ABC transporter superfamily. sn-glycerol-3-phosphate importer (TC 3.A.1.1.3) family. As to quaternary structure, the complex is composed of two ATP-binding proteins (UgpC), two transmembrane proteins (UgpA and UgpE) and a solute-binding protein (UgpB).

The protein resides in the cell inner membrane. It carries out the reaction sn-glycerol 3-phosphate(out) + ATP + H2O = sn-glycerol 3-phosphate(in) + ADP + phosphate + H(+). In terms of biological role, part of the ABC transporter complex UgpBAEC involved in sn-glycerol-3-phosphate (G3P) import. Responsible for energy coupling to the transport system. The polypeptide is sn-glycerol-3-phosphate import ATP-binding protein UgpC (Ralstonia nicotianae (strain ATCC BAA-1114 / GMI1000) (Ralstonia solanacearum)).